A 1249-amino-acid polypeptide reads, in one-letter code: DNA repair protein REV1 (1249 aa).

The region spanning 44–131 is the BRCT domain; sequence TASAIFSGVA…RLLSSAPYQL (88 aa). Positions 253–323 are disordered; it reads LSLDSTQEEK…STVQGPSSTK (71 aa). Basic and acidic residues predominate over residues 259-275; it reads QEEKRAEKSNADFRDCT. Over residues 294–319 the composition is skewed to polar residues; the sequence is RTNSLSPSLHSNTKINGAHHSTVQGP. Residues 350 to 360 are interaction with target DNA; the sequence is FYSRSRLHHIS. Residues Arg-355, 421–425, 508–514, Asn-520, and Asp-568 each bind dCTP; these read DMDCF and SCSYEAR. In terms of domain architecture, UmuC spans 417-651; the sequence is VMHVDMDCFF…QLVTNLPGVG (235 aa). Asp-421 serves as a coordination point for Mg(2+). Mg(2+) contacts are provided by Asp-568 and Glu-569. Interaction with target DNA stretches follow at residues 651 to 654 and 707 to 715; these read GRSM and RKSVSAEIN. Positions 1035–1047 are enriched in basic and acidic residues; it reads AYDQRQRQGEDTT. The tract at residues 1035–1109 is disordered; the sequence is AYDQRQRQGE…LPGAYGSPQK (75 aa). A compositionally biased stretch (polar residues) spans 1048–1057; the sequence is HQQPTSTSVP. The short motif at 1072–1078 is the Nuclear localization signal element; that stretch reads KRNKRKN. The protein interaction domain; mediates interaction with DNA polymerase zeta stretch occupies residues 1150–1249; that stretch reads FRPAAPNLAG…QTYGSTLKVT (100 aa).

Belongs to the DNA polymerase type-Y family. In terms of assembly, interacts with FAAP20. Monomer. Interacts with the DNA polymerase zeta which is composed of REV3L and MAD2L2; the interaction with MAD2L2 is direct and requires that REV3L is in its closed conformation. Interacts with POLH, POLI and POLK. Ubiquitous.

The protein resides in the nucleus. In terms of biological role, deoxycytidyl transferase involved in DNA repair. Transfers a dCMP residue from dCTP to the 3'-end of a DNA primer in a template-dependent reaction. May assist in the first step in the bypass of abasic lesions by the insertion of a nucleotide opposite the lesion. Required for normal induction of mutations by physical and chemical agents. The chain is DNA repair protein REV1 (Rev1) from Mus musculus (Mouse).